The chain runs to 528 residues: Chaperonin GroEL, chloroplastic (528 aa).

Residues 29 to 32, 86 to 90, G414, 480 to 482, and D496 each bind ATP; these read TLGP, DGTTT, and DAA.

This sequence belongs to the chaperonin (HSP60) family. As to quaternary structure, forms a cylinder of 14 subunits composed of two heptameric rings stacked back-to-back. Interacts with the co-chaperonin GroES.

It localises to the plastid. It is found in the chloroplast. The catalysed reaction is ATP + H2O + a folded polypeptide = ADP + phosphate + an unfolded polypeptide.. Together with its co-chaperonin GroES, plays an essential role in assisting protein folding. The GroEL-GroES system forms a nano-cage that allows encapsulation of the non-native substrate proteins and provides a physical environment optimized to promote and accelerate protein folding. This Pyropia yezoensis (Susabi-nori) protein is Chaperonin GroEL, chloroplastic.